Consider the following 388-residue polypeptide: Calcium-binding and spermatid-specific protein 1 (388 aa).

The tract at residues 1–20 (MAEDGLPKIYSHPPAESTKT) is disordered. Thr-280 is modified (phosphothreonine; by CK2). A phosphoserine mark is found at Ser-312 and Ser-344.

Its subcellular location is the cytoplasm. The protein localises to the mitochondrion inner membrane. It localises to the cell projection. It is found in the cilium. The protein resides in the flagellum. Its subcellular location is the cytoplasmic vesicle. The protein localises to the secretory vesicle. It localises to the acrosome. Functionally, calcium-binding protein. Essential for maintaining the structural integrity of the sperm flagella. The protein is Calcium-binding and spermatid-specific protein 1 (CABS1) of Bos taurus (Bovine).